Here is a 415-residue protein sequence, read N- to C-terminus: Homoserine O-succinyltransferase (415 aa).

The 315-residue stretch at 69–383 (NAVLVCHALN…PHGHDAFLLD (315 aa)) folds into the AB hydrolase-1 domain. Ser-175 acts as the Nucleophile in catalysis. Arg-245 is a binding site for substrate. Active-site residues include Asp-344 and His-377. Substrate is bound at residue Asp-378.

This sequence belongs to the AB hydrolase superfamily. MetX family. Homodimer.

Its subcellular location is the cytoplasm. It carries out the reaction L-homoserine + succinyl-CoA = O-succinyl-L-homoserine + CoA. It participates in amino-acid biosynthesis; L-methionine biosynthesis via de novo pathway; O-succinyl-L-homoserine from L-homoserine: step 1/1. Functionally, transfers a succinyl group from succinyl-CoA to L-homoserine, forming succinyl-L-homoserine. The polypeptide is Homoserine O-succinyltransferase (Bordetella pertussis (strain Tohama I / ATCC BAA-589 / NCTC 13251)).